Consider the following 432-residue polypeptide: Putative D-alanyl-D-alanine carboxypeptidase (432 aa).

The helical; Signal-anchor transmembrane segment at 7–25 (ATVLLTFSLSAFAVEYPVL) threads the bilayer.

The protein belongs to the peptidase S12 family. YfeW subfamily.

It is found in the cell inner membrane. It carries out the reaction Preferential cleavage: (Ac)2-L-Lys-D-Ala-|-D-Ala. Also transpeptidation of peptidyl-alanyl moieties that are N-acyl substituents of D-alanine.. This Salmonella enteritidis PT4 (strain P125109) protein is Putative D-alanyl-D-alanine carboxypeptidase.